The primary structure comprises 672 residues: DNA mismatch repair protein MutL (672 aa).

Over residues 443–454 (SYTSDSNQYENS) the composition is skewed to polar residues. Residues 443–469 (SYTSDSNQYENSCKSDVDKESKSKTTG) form a disordered region. Residues 455–465 (CKSDVDKESKS) are compositionally biased toward basic and acidic residues.

It belongs to the DNA mismatch repair MutL/HexB family.

Functionally, this protein is involved in the repair of mismatches in DNA. It is required for dam-dependent methyl-directed DNA mismatch repair. May act as a 'molecular matchmaker', a protein that promotes the formation of a stable complex between two or more DNA-binding proteins in an ATP-dependent manner without itself being part of a final effector complex. The polypeptide is DNA mismatch repair protein MutL (Clostridium botulinum (strain Eklund 17B / Type B)).